A 242-amino-acid chain; its full sequence is Protein fmp-52, mitochondrial (242 aa).

A mitochondrion-targeting transit peptide spans 1–87; it reads MSTSTPTSTA…VISSLGTTRV (87 aa). Residues 33 to 58 are disordered; the sequence is SSQVQTISRRAPANPTNSSRLSPTVN. Polar residues predominate over residues 35-58; the sequence is QVQTISRRAPANPTNSSRLSPTVN.

The protein belongs to the FMP52 family.

Its subcellular location is the mitochondrion outer membrane. The polypeptide is Protein fmp-52, mitochondrial (fmp-52) (Neurospora crassa (strain ATCC 24698 / 74-OR23-1A / CBS 708.71 / DSM 1257 / FGSC 987)).